A 516-amino-acid chain; its full sequence is L-amino-acid oxidase (516 aa).

An N-terminal signal peptide occupies residues 1 to 18 (MNVFFMFSLLFLAALGSC). Cysteine 28 and cysteine 189 are joined by a disulfide. Residues 61 to 62 (MA), 81 to 82 (EA), arginine 89, and 103 to 106 (GPMR) each bind FAD. Positions 106 and 239 each coordinate substrate. FAD is bound at residue valine 279. Cysteines 349 and 430 form a disulfide. Asparagine 379 carries N-linked (GlcNAc...) asparagine glycosylation. Tyrosine 390 contributes to the substrate binding site. FAD-binding positions include glutamate 475 and 482-487 (GWIDST). A substrate-binding site is contributed by 482-483 (GW).

It belongs to the flavin monoamine oxidase family. FIG1 subfamily. In terms of assembly, homodimer; non-covalently linked. Requires FAD as cofactor. Post-translationally, N-glycosylated. As to expression, expressed by the venom gland.

It localises to the secreted. The enzyme catalyses an L-alpha-amino acid + O2 + H2O = a 2-oxocarboxylate + H2O2 + NH4(+). It carries out the reaction L-leucine + O2 + H2O = 4-methyl-2-oxopentanoate + H2O2 + NH4(+). The catalysed reaction is L-phenylalanine + O2 + H2O = 3-phenylpyruvate + H2O2 + NH4(+). It catalyses the reaction L-methionine + O2 + H2O = 4-methylsulfanyl-2-oxobutanoate + H2O2 + NH4(+). The enzyme catalyses L-arginine + O2 + H2O = 5-guanidino-2-oxopentanoate + H2O2 + NH4(+). In terms of biological role, catalyzes an oxidative deamination of predominantly hydrophobic and aromatic L-amino acids, thus producing hydrogen peroxide that may contribute to the diverse toxic effects of this enzyme. Is active on L-Arg, L-Phe, L-Met, and L-Leu and is weakly active on L-Val. Exhibits diverse biological activities, such as hemorrhage, hemolysis, edema, apoptosis of vascular endothelial cells or tumor cell lines, antibacterial and antiparasitic activities, as well as regulation of platelet aggregation. Its effect on platelets is controversial, since it either induces aggregation or inhibits agonist-induced aggregation. These different effects are probably due to different experimental conditions. The sequence is that of L-amino-acid oxidase from Crotalus adamanteus (Eastern diamondback rattlesnake).